Here is a 228-residue protein sequence, read N- to C-terminus: Claudin-10 (228 aa).

A helical membrane pass occupies residues 1–21 (MASTASEIIAFMVSISGWVLV). Residues 22–80 (SSTLPTDYWKVSTIDGTVITTATYWANLWKACVTDSTGVSNCKDFPSMLALDGYIQACR) lie on the Extracellular side of the membrane. The chain crosses the membrane as a helical span at residues 81-101 (GLMIAAVSLGFFGSIFALFGM). The Cytoplasmic segment spans residues 102-115 (KCTKVGGSDKAKAK). The chain crosses the membrane as a helical span at residues 116–136 (IACLAGIVFILSGLCSMTGCS). Over 137 to 160 (LYANKITTEFFDPLFVEQKYELGA) the chain is Extracellular. A helical transmembrane segment spans residues 161–181 (ALFIGWAGASLCIIGGVIFCF). At 182–228 (SISDNNKTPRYTYNGATSVMSSRTKYHGGEDFKTTNPSKQFDKNAYV) the chain is on the cytoplasmic side.

Belongs to the claudin family. In terms of assembly, can form homodimers both in trans (interaction between CLDN10 molecules in opposing membranes) and in cis (interaction between CLDN10 molecules within one membrane). As to quaternary structure, interacts with CLDN19. As to expression, expressed in the kidney, eccrine sweat glands and in all layers of the epidermis. In the kidney, it is detected in the thick ascending limb of Henle's loop (TAL). In the sweat glands, it is expressed in cells from secretory portions, corresponding to the clear cells.

It is found in the cell junction. The protein resides in the tight junction. The protein localises to the cell membrane. It carries out the reaction Na(+)(in) = Na(+)(out). It catalyses the reaction Li(+)(in) = Li(+)(out). The catalysed reaction is K(+)(in) = K(+)(out). The enzyme catalyses Rb(+)(in) = Rb(+)(out). It carries out the reaction Cs(+)(in) = Cs(+)(out). It catalyses the reaction NH4(+)(in) = NH4(+)(out). The catalysed reaction is methylamine(out) = methylamine(in). The enzyme catalyses Mg(2+)(in) = Mg(2+)(out). It carries out the reaction Ca(2+)(in) = Ca(2+)(out). It catalyses the reaction Sr(2+)(in) = Sr(2+)(out). The catalysed reaction is chloride(in) = chloride(out). The enzyme catalyses nitrate(in) = nitrate(out). Forms paracellular channels: polymerizes in tight junction strands with cation- and anion-selective channels through the strands, conveying epithelial permeability in a process known as paracellular tight junction permeability. Functionally, forms cation-selective paracellular channels. In sweat glands and in the thick ascending limb (TAL) of Henle's loop in kidney, it controls paracellular sodium permeability which is essential for proper sweat production and renal function. Its function is as follows. Forms anion-selective paracellular channels. In renal proximal tubules, it conveys selective chloride over hydrogencarbonate anion permeability which is required for renal chloride reabsorption and salt homeostasis. This chain is Claudin-10, found in Homo sapiens (Human).